We begin with the raw amino-acid sequence, 253 residues long: N-acetylmuramoyl-L-alanine amidase CwlM (253 aa).

Positions I4–A172 constitute a MurNAc-LAA domain. The SPOR domain occupies K179 to E253. A run of 2 repeats spans residues L184–S219 and L220–E253. A 2 X 35 AA approximate tandem repeats region spans residues L184 to E253.

The protein belongs to the N-acetylmuramoyl-L-alanine amidase 3 family.

The protein localises to the secreted. The enzyme catalyses Hydrolyzes the link between N-acetylmuramoyl residues and L-amino acid residues in certain cell-wall glycopeptides.. Its function is as follows. Hydrolyzes the cell wall of M.luteus more efficiently than that of B.licheniformis and B.subtilis. The C-terminal region, including the repeats, determines substrate specificity. This is N-acetylmuramoyl-L-alanine amidase CwlM (cwlM) from Bacillus licheniformis.